Reading from the N-terminus, the 100-residue chain is Urease subunit gamma (100 aa).

Belongs to the urease gamma subunit family. In terms of assembly, heterotrimer of UreA (gamma), UreB (beta) and UreC (alpha) subunits. Three heterotrimers associate to form the active enzyme.

The protein resides in the cytoplasm. It catalyses the reaction urea + 2 H2O + H(+) = hydrogencarbonate + 2 NH4(+). It participates in nitrogen metabolism; urea degradation; CO(2) and NH(3) from urea (urease route): step 1/1. This is Urease subunit gamma from Cupriavidus taiwanensis (strain DSM 17343 / BCRC 17206 / CCUG 44338 / CIP 107171 / LMG 19424 / R1) (Ralstonia taiwanensis (strain LMG 19424)).